The primary structure comprises 165 residues: Large ribosomal subunit protein uL22c (165 aa).

Belongs to the universal ribosomal protein uL22 family. Part of the 50S ribosomal subunit.

It localises to the plastid. The protein resides in the chloroplast. This protein binds specifically to 23S rRNA. In terms of biological role, the globular domain of the protein is located near the polypeptide exit tunnel on the outside of the subunit, while an extended beta-hairpin is found that lines the wall of the exit tunnel in the center of the 70S ribosome. The protein is Large ribosomal subunit protein uL22c (rpl22) of Daucus carota (Wild carrot).